The chain runs to 249 residues: uncharacterized protein (249 aa).

Positions 7-64 constitute an S4 RNA-binding domain; the sequence is PRVHVFLAEKGVGSRRFCEELIRKKLVRVNNTIAKLGDKVTLGDRIIYKKQIFVFKDF. D112 acts as the Nucleophile in catalysis.

Belongs to the pseudouridine synthase RsuA family.

It carries out the reaction a uridine in RNA = a pseudouridine in RNA. This is an uncharacterized protein from Borreliella burgdorferi (strain ATCC 35210 / DSM 4680 / CIP 102532 / B31) (Borrelia burgdorferi).